We begin with the raw amino-acid sequence, 454 residues long: Bifunctional protein GlmU (454 aa).

Residues 1–227 are pyrophosphorylase; that stretch reads MSKLSVVILA…MMEVEGANNR (227 aa). UDP-N-acetyl-alpha-D-glucosamine contacts are provided by residues 9-12, K23, Q74, 79-80, 101-103, G138, E152, N167, and N225; these read LAAG, GT, and YGD. D103 provides a ligand contact to Mg(2+). Residue N225 participates in Mg(2+) binding. The tract at residues 228–248 is linker; the sequence is LQLAALERYFQRKQATALLLA. The N-acetyltransferase stretch occupies residues 249-454; the sequence is GVSLADPERF…ADWERPSKKK (206 aa). Residues R331 and K349 each coordinate UDP-N-acetyl-alpha-D-glucosamine. H361 functions as the Proton acceptor in the catalytic mechanism. Positions 364 and 375 each coordinate UDP-N-acetyl-alpha-D-glucosamine. Acetyl-CoA contacts are provided by residues A378, 384–385, S403, A421, and R438; that span reads NY.

It in the N-terminal section; belongs to the N-acetylglucosamine-1-phosphate uridyltransferase family. The protein in the C-terminal section; belongs to the transferase hexapeptide repeat family. Homotrimer. The cofactor is Mg(2+).

Its subcellular location is the cytoplasm. The catalysed reaction is alpha-D-glucosamine 1-phosphate + acetyl-CoA = N-acetyl-alpha-D-glucosamine 1-phosphate + CoA + H(+). It catalyses the reaction N-acetyl-alpha-D-glucosamine 1-phosphate + UTP + H(+) = UDP-N-acetyl-alpha-D-glucosamine + diphosphate. It functions in the pathway nucleotide-sugar biosynthesis; UDP-N-acetyl-alpha-D-glucosamine biosynthesis; N-acetyl-alpha-D-glucosamine 1-phosphate from alpha-D-glucosamine 6-phosphate (route II): step 2/2. Its pathway is nucleotide-sugar biosynthesis; UDP-N-acetyl-alpha-D-glucosamine biosynthesis; UDP-N-acetyl-alpha-D-glucosamine from N-acetyl-alpha-D-glucosamine 1-phosphate: step 1/1. The protein operates within bacterial outer membrane biogenesis; LPS lipid A biosynthesis. Functionally, catalyzes the last two sequential reactions in the de novo biosynthetic pathway for UDP-N-acetylglucosamine (UDP-GlcNAc). The C-terminal domain catalyzes the transfer of acetyl group from acetyl coenzyme A to glucosamine-1-phosphate (GlcN-1-P) to produce N-acetylglucosamine-1-phosphate (GlcNAc-1-P), which is converted into UDP-GlcNAc by the transfer of uridine 5-monophosphate (from uridine 5-triphosphate), a reaction catalyzed by the N-terminal domain. This is Bifunctional protein GlmU from Actinobacillus succinogenes (strain ATCC 55618 / DSM 22257 / CCUG 43843 / 130Z).